A 147-amino-acid chain; its full sequence is Large ribosomal subunit protein uL15 (147 aa).

The interval 1–42 (MTIKVHHLRPAPGAKTTKTRVGRGEGSKGKTAGRGTKGSKAR) is disordered.

The protein belongs to the universal ribosomal protein uL15 family. In terms of assembly, part of the 50S ribosomal subunit.

In terms of biological role, binds to the 23S rRNA. In Salinispora tropica (strain ATCC BAA-916 / DSM 44818 / JCM 13857 / NBRC 105044 / CNB-440), this protein is Large ribosomal subunit protein uL15.